The primary structure comprises 474 residues: Methylenetetrahydrofolate--tRNA-(uracil-5-)-methyltransferase TrmFO (474 aa).

14–19 (GGGLAG) is a binding site for FAD.

It belongs to the MnmG family. TrmFO subfamily. The cofactor is FAD.

It localises to the cytoplasm. The enzyme catalyses uridine(54) in tRNA + (6R)-5,10-methylene-5,6,7,8-tetrahydrofolate + NADH + H(+) = 5-methyluridine(54) in tRNA + (6S)-5,6,7,8-tetrahydrofolate + NAD(+). The catalysed reaction is uridine(54) in tRNA + (6R)-5,10-methylene-5,6,7,8-tetrahydrofolate + NADPH + H(+) = 5-methyluridine(54) in tRNA + (6S)-5,6,7,8-tetrahydrofolate + NADP(+). Functionally, catalyzes the folate-dependent formation of 5-methyl-uridine at position 54 (M-5-U54) in all tRNAs. This Caulobacter vibrioides (strain ATCC 19089 / CIP 103742 / CB 15) (Caulobacter crescentus) protein is Methylenetetrahydrofolate--tRNA-(uracil-5-)-methyltransferase TrmFO.